Here is a 427-residue protein sequence, read N- to C-terminus: NADH-quinone oxidoreductase subunit 14 (427 aa).

The next 14 membrane-spanning stretches (helical) occupy residues 1 to 21 (MTLAILAVFSVALTLLGFVLP), 30 to 50 (LLGLALALASLLLTWGKPFAF), 57 to 77 (GVSQVFTLLALLGALWTVGLV), 79 to 99 (SGRFEFYLLVLYAALGMHLLA), 104 to 124 (LLLMLVALEALSLPLYALATW), 137 to 157 (FLLGALAAAFFLYGAALFYGA), 172 to 192 (YALALGLLLVGLGFKAALAPF), 204 to 224 (PTPVVLFMATSVKAAAFAALL), 230 to 250 (PEALALLVALSVVVGNLAALA), 257 to 277 (LLAYSSIAHAGYMALALYTGN), 280 to 300 (ALGFYLLTYVLATGLAFAVLS), 322 to 342 (LGLAFLVAMLSLLGLPPLAGF), 360 to 380 (VLVLALVTSAVSAYYYLGLGL), and 400 to 420 (AAVVAAGVLLLALGLLPGLVL).

Belongs to the complex I subunit 2 family. In terms of assembly, NDH-1 is composed of 15 different subunits, Nqo1 to Nqo15. The complex has a L-shaped structure, with the hydrophobic arm (subunits Nqo7, Nqo8 and Nqo10 to Nqo14) embedded in the membrane and the hydrophilic peripheral arm (subunits Nqo1 to Nqo6, Nqo9 and Nqo15) protruding into the bacterial cytoplasm. The hydrophilic domain contains all the redox centers.

It is found in the cell inner membrane. The enzyme catalyses a quinone + NADH + 5 H(+)(in) = a quinol + NAD(+) + 4 H(+)(out). Functionally, NDH-1 shuttles electrons from NADH, via FMN and iron-sulfur (Fe-S) centers, to quinones in the respiratory chain. The immediate electron acceptor for the enzyme in this species is menaquinone. Couples the redox reaction to proton translocation (for every two electrons transferred, four hydrogen ions are translocated across the cytoplasmic membrane), and thus conserves the redox energy in a proton gradient required for the synthesis of ATP. This Thermus thermophilus (strain ATCC 27634 / DSM 579 / HB8) protein is NADH-quinone oxidoreductase subunit 14 (nqo14).